Here is a 353-residue protein sequence, read N- to C-terminus: S-adenosylmethionine:tRNA ribosyltransferase-isomerase (353 aa).

The protein belongs to the QueA family. In terms of assembly, monomer.

The protein localises to the cytoplasm. The enzyme catalyses 7-aminomethyl-7-carbaguanosine(34) in tRNA + S-adenosyl-L-methionine = epoxyqueuosine(34) in tRNA + adenine + L-methionine + 2 H(+). The protein operates within tRNA modification; tRNA-queuosine biosynthesis. Its function is as follows. Transfers and isomerizes the ribose moiety from AdoMet to the 7-aminomethyl group of 7-deazaguanine (preQ1-tRNA) to give epoxyqueuosine (oQ-tRNA). The sequence is that of S-adenosylmethionine:tRNA ribosyltransferase-isomerase from Blochmanniella floridana.